A 1021-amino-acid polypeptide reads, in one-letter code: DNA-directed RNA polymerase 2B, chloroplastic/mitochondrial (1021 aa).

The tract at residues 315 to 337 is disordered; sequence KKQKAEKDKQKEDGEHVTQEQEK. Active-site residues include Asp-722, Lys-797, and Asp-954.

This sequence belongs to the phage and mitochondrial RNA polymerase family.

The protein resides in the plastid. It localises to the chloroplast. It is found in the mitochondrion. It carries out the reaction RNA(n) + a ribonucleoside 5'-triphosphate = RNA(n+1) + diphosphate. In terms of biological role, DNA-dependent RNA polymerase catalyzes the transcription of DNA into RNA using the four ribonucleoside triphosphates as substrates. The polypeptide is DNA-directed RNA polymerase 2B, chloroplastic/mitochondrial (RPOT2-TOM) (Nicotiana tabacum (Common tobacco)).